The sequence spans 623 residues: uncharacterized protein (623 aa).

The stretch at 24-51 (RALVQKDELAQASQDVEDMRDCYDSLLN) forms a coiled coil. Disordered stretches follow at residues 148 to 170 (TRQR…QQLQ), 240 to 343 (FSGL…TTPP), 362 to 393 (ALPT…TKAI), 454 to 531 (SFSG…LGYS), and 585 to 607 (KKLG…PQAL). The span at 243 to 259 (LEDDDGDDEIENNENDG) shows a compositional bias: acidic residues. The span at 328–343 (VSQSAPLFPENRTTPP) shows a compositional bias: polar residues. The segment covering 364 to 379 (PTPVETTRSPSSTTSP) has biased composition (low complexity). Residues 384–393 (VGSSNPTKAI) are compositionally biased toward polar residues. Low complexity predominate over residues 484-495 (PVSKLPKVSSSP). Polar residues predominate over residues 496–506 (TASPTFVSTPK). Residues 590–606 (PSPPLTPMSLIHPPPQA) are compositionally biased toward pro residues.

This is an uncharacterized protein from Arabidopsis thaliana (Mouse-ear cress).